The sequence spans 90 residues: Small ribosomal subunit protein uS15c (90 aa).

It belongs to the universal ribosomal protein uS15 family. Part of the 30S ribosomal subunit.

Its subcellular location is the plastid. It is found in the chloroplast. The protein is Small ribosomal subunit protein uS15c (rps15) of Citrus sinensis (Sweet orange).